A 154-amino-acid polypeptide reads, in one-letter code: 17 kDa surface antigen (154 aa).

The N-terminal stretch at 1–19 (MKLLSKIMVIALATSMLQA) is a signal peptide. Cys20 is lipidated: N-palmitoyl cysteine. A lipid anchor (S-diacylglycerol cysteine) is attached at Cys20.

It belongs to the rickettsiale 17 kDa surface antigen family.

The protein localises to the cell outer membrane. The sequence is that of 17 kDa surface antigen (omp) from Rickettsia parkeri.